We begin with the raw amino-acid sequence, 249 residues long: 2,3-bisphosphoglycerate-dependent phosphoglycerate mutase (249 aa).

Residues arginine 9–asparagine 16, threonine 22–glycine 23, arginine 61, glutamate 88–tyrosine 91, lysine 99, arginine 115–arginine 116, and glycine 184–asparagine 185 each bind substrate. Histidine 10 functions as the Tele-phosphohistidine intermediate in the catalytic mechanism. Catalysis depends on glutamate 88, which acts as the Proton donor/acceptor.

The protein belongs to the phosphoglycerate mutase family. BPG-dependent PGAM subfamily. In terms of assembly, homodimer.

It carries out the reaction (2R)-2-phosphoglycerate = (2R)-3-phosphoglycerate. It participates in carbohydrate degradation; glycolysis; pyruvate from D-glyceraldehyde 3-phosphate: step 3/5. Its function is as follows. Catalyzes the interconversion of 2-phosphoglycerate and 3-phosphoglycerate. In Xanthomonas axonopodis pv. citri (strain 306), this protein is 2,3-bisphosphoglycerate-dependent phosphoglycerate mutase.